The primary structure comprises 384 residues: S-adenosylmethionine synthase (384 aa).

Position 15 (His-15) interacts with ATP. Asp-17 is a Mg(2+) binding site. Residue Glu-43 coordinates K(+). Residues Glu-56 and Gln-99 each coordinate L-methionine. The flexible loop stretch occupies residues 99 to 109 (QSPDINQGVDR). Residues 164 to 166 (DAK), 231 to 232 (RF), Asp-240, 246 to 247 (RK), Ala-263, and Lys-267 each bind ATP. L-methionine is bound at residue Asp-240. Lys-271 serves as a coordination point for L-methionine.

This sequence belongs to the AdoMet synthase family. In terms of assembly, homotetramer; dimer of dimers. Requires Mg(2+) as cofactor. K(+) serves as cofactor.

Its subcellular location is the cytoplasm. The catalysed reaction is L-methionine + ATP + H2O = S-adenosyl-L-methionine + phosphate + diphosphate. It functions in the pathway amino-acid biosynthesis; S-adenosyl-L-methionine biosynthesis; S-adenosyl-L-methionine from L-methionine: step 1/1. In terms of biological role, catalyzes the formation of S-adenosylmethionine (AdoMet) from methionine and ATP. The overall synthetic reaction is composed of two sequential steps, AdoMet formation and the subsequent tripolyphosphate hydrolysis which occurs prior to release of AdoMet from the enzyme. The chain is S-adenosylmethionine synthase from Shewanella pealeana (strain ATCC 700345 / ANG-SQ1).